Here is a 74-residue protein sequence, read N- to C-terminus: Lambda-hexatoxin-Hv1e (74 aa).

The first 22 residues, 1–22, serve as a signal peptide directing secretion; that stretch reads MNTATCFIVLLVVATVIGGIEA. A propeptide spanning residues 23 to 35 is cleaved from the precursor; it reads GEFDMRKDVMGLF. 4 disulfides stabilise this stretch: Cys40–Cys54, Cys47–Cys59, Cys50–Cys51, and Cys53–Cys69.

It belongs to the neurotoxin 11 (kappa toxin) family. In terms of tissue distribution, expressed by the venom gland.

It localises to the secreted. Its function is as follows. This excitatory toxin inhibits insect calcium-activated potassium (KCa) channels (Slo-type). The sequence is that of Lambda-hexatoxin-Hv1e from Hadronyche versuta (Blue mountains funnel-web spider).